Reading from the N-terminus, the 324-residue chain is tRNA uridine(34) hydroxylase (324 aa).

The region spanning 127 to 221 (QQEETIVIDA…YGKDPEVQGE (95 aa)) is the Rhodanese domain. The active-site Cysteine persulfide intermediate is cysteine 181.

This sequence belongs to the TrhO family.

The enzyme catalyses uridine(34) in tRNA + AH2 + O2 = 5-hydroxyuridine(34) in tRNA + A + H2O. Functionally, catalyzes oxygen-dependent 5-hydroxyuridine (ho5U) modification at position 34 in tRNAs. This Bacillus cytotoxicus (strain DSM 22905 / CIP 110041 / 391-98 / NVH 391-98) protein is tRNA uridine(34) hydroxylase.